The chain runs to 82 residues: Turripeptide Gsp9.2 (82 aa).

The first 23 residues, 1-23 (MMAKLMITVMMVLLLSLQQGADG), serve as a signal peptide directing secretion. The propeptide occupies 24-46 (RSERWRKNQMAASSIMRNLITAR). Proline 49 and proline 50 each carry 4-hydroxyproline. 3 disulfide bridges follow: cysteine 53–cysteine 68, cysteine 58–cysteine 72, and cysteine 64–cysteine 79. Glutamate 56 is subject to 4-carboxyglutamate.

It belongs to the Pg turripeptide superfamily. As to expression, expressed by the venom duct.

The protein localises to the secreted. The chain is Turripeptide Gsp9.2 from Gemmula speciosa (Splendid gem-turris).